Consider the following 418-residue polypeptide: Elongation factor 1-gamma 1 (418 aa).

The region spanning Met-1–Pro-82 is the GST N-terminal domain. In terms of domain architecture, GST C-terminal spans Ser-87–Pro-213. Residues Ser-211–Leu-265 are disordered. Residues Ala-221–Lys-246 show a composition bias toward basic and acidic residues. In terms of domain architecture, EF-1-gamma C-terminal spans Pro-258–Lys-418.

As to quaternary structure, EF-1 is composed of four subunits: alpha, beta, delta, and gamma.

In terms of biological role, probably plays a role in anchoring the complex to other cellular components. The chain is Elongation factor 1-gamma 1 from Oryza sativa subsp. japonica (Rice).